The chain runs to 155 residues: 6,7-dimethyl-8-ribityllumazine synthase (155 aa).

5-amino-6-(D-ribitylamino)uracil contacts are provided by residues Phe-24, 58–60, and 82–84; these read AFE and VII. Position 87 to 88 (87 to 88) interacts with (2S)-2-hydroxy-3-oxobutyl phosphate; sequence ST. The active-site Proton donor is the His-90. Residue Phe-115 coordinates 5-amino-6-(D-ribitylamino)uracil. Arg-129 provides a ligand contact to (2S)-2-hydroxy-3-oxobutyl phosphate.

Belongs to the DMRL synthase family.

The enzyme catalyses (2S)-2-hydroxy-3-oxobutyl phosphate + 5-amino-6-(D-ribitylamino)uracil = 6,7-dimethyl-8-(1-D-ribityl)lumazine + phosphate + 2 H2O + H(+). It participates in cofactor biosynthesis; riboflavin biosynthesis; riboflavin from 2-hydroxy-3-oxobutyl phosphate and 5-amino-6-(D-ribitylamino)uracil: step 1/2. Catalyzes the formation of 6,7-dimethyl-8-ribityllumazine by condensation of 5-amino-6-(D-ribitylamino)uracil with 3,4-dihydroxy-2-butanone 4-phosphate. This is the penultimate step in the biosynthesis of riboflavin. This Pelodictyon phaeoclathratiforme (strain DSM 5477 / BU-1) protein is 6,7-dimethyl-8-ribityllumazine synthase.